The sequence spans 820 residues: Phenylalanine--tRNA ligase beta subunit (820 aa).

The tRNA-binding domain occupies 42 to 154 (KGGLEGLVIG…EDAVPGTLAK (113 aa)). One can recognise a B5 domain in the interval 413–489 (AQDFIVELTY…RIYGYNNVEI (77 aa)). Positions 467, 473, 476, and 477 each coordinate Mg(2+). The FDX-ACB domain occupies 727 to 820 (SKFPAVKRDL…LEDKLGAKLR (94 aa)).

It belongs to the phenylalanyl-tRNA synthetase beta subunit family. Type 1 subfamily. In terms of assembly, tetramer of two alpha and two beta subunits. Mg(2+) is required as a cofactor.

Its subcellular location is the cytoplasm. It catalyses the reaction tRNA(Phe) + L-phenylalanine + ATP = L-phenylalanyl-tRNA(Phe) + AMP + diphosphate + H(+). The chain is Phenylalanine--tRNA ligase beta subunit from Bacteroides fragilis (strain ATCC 25285 / DSM 2151 / CCUG 4856 / JCM 11019 / LMG 10263 / NCTC 9343 / Onslow / VPI 2553 / EN-2).